A 1455-amino-acid polypeptide reads, in one-letter code: DNA-directed RNA polymerase subunit beta (1455 aa).

Belongs to the RNA polymerase beta chain family. In terms of assembly, the RNAP catalytic core consists of 2 alpha, 1 beta, 1 beta' and 1 omega subunit. When a sigma factor is associated with the core the holoenzyme is formed, which can initiate transcription.

The catalysed reaction is RNA(n) + a ribonucleoside 5'-triphosphate = RNA(n+1) + diphosphate. DNA-dependent RNA polymerase catalyzes the transcription of DNA into RNA using the four ribonucleoside triphosphates as substrates. This is DNA-directed RNA polymerase subunit beta from Rhizorhabdus wittichii (strain DSM 6014 / CCUG 31198 / JCM 15750 / NBRC 105917 / EY 4224 / RW1) (Sphingomonas wittichii).